Here is a 279-residue protein sequence, read N- to C-terminus: Small ribosomal subunit protein uS2 (279 aa).

Composition is skewed to acidic residues over residues Met1–Val18, Thr28–Asn42, and Ala65–Asp81. The interval Met1–Asp81 is disordered.

It belongs to the universal ribosomal protein uS2 family.

This is Small ribosomal subunit protein uS2 from Haloquadratum walsbyi (strain DSM 16790 / HBSQ001).